A 326-amino-acid chain; its full sequence is Immune-associated nucleotide-binding protein 4 (326 aa).

In terms of domain architecture, AIG1-type G spans 17–225; it reads EPIKNIVLVG…FTDEMHRKIQ (209 aa). Residues 26–33 form a G1 region; sequence GRTGNGKS. GTP-binding positions include 26–34 and S47; that span reads GRTGNGKSA. The segment at 53–57 is G2; sequence GVTMK. The segment at 75-78 is G3; sequence DTPG. A G4 region spans residues 145–148; it reads TGGD. Residues 184 to 186 are G5; it reads DNR. Residue N185 participates in GTP binding. Positions 217–241 form a coiled coil; it reads TDEMHRKIQKEAETLREQQKEVESK.

It belongs to the TRAFAC class TrmE-Era-EngA-EngB-Septin-like GTPase superfamily. AIG1/Toc34/Toc159-like paraseptin GTPase family. IAN subfamily. In terms of tissue distribution, expressed in radicles of the germinating seeds.

The polypeptide is Immune-associated nucleotide-binding protein 4 (Arabidopsis thaliana (Mouse-ear cress)).